Consider the following 31-residue polypeptide: Cyclotide cter-R (31 aa).

The cyclopeptide (Gly-Asn) cross-link spans 1 to 31 (GIPCGESCVFIPCTVTALLGCSCKDKVCYKN). 3 disulfide bridges follow: cysteine 4–cysteine 21, cysteine 8–cysteine 23, and cysteine 13–cysteine 28.

In terms of processing, this is a cyclic peptide.

It localises to the secreted. Probably participates in a plant defense mechanism. This chain is Cyclotide cter-R, found in Clitoria ternatea (Butterfly pea).